The primary structure comprises 320 residues: Ferrochelatase (320 aa).

His-194 and Glu-275 together coordinate Fe cation.

Belongs to the ferrochelatase family. Monomer.

The protein localises to the cytoplasm. It catalyses the reaction heme b + 2 H(+) = protoporphyrin IX + Fe(2+). It functions in the pathway porphyrin-containing compound metabolism; protoheme biosynthesis; protoheme from protoporphyrin-IX: step 1/1. In terms of biological role, catalyzes the ferrous insertion into protoporphyrin IX. The chain is Ferrochelatase from Escherichia coli O127:H6 (strain E2348/69 / EPEC).